A 346-amino-acid polypeptide reads, in one-letter code: Peripherin-2 (346 aa).

Over 1–24 (MALLKVKFDQKKRVKLAQGLWLMN) the chain is Cytoplasmic. Residues 25 to 43 (WLSVLAGIVIFSLGLFLKI) traverse the membrane as a helical segment. The Lumenal segment spans residues 44-61 (ELRKRSDVMNNSESHFVP). Residue asparagine 53 is glycosylated (N-linked (GlcNAc...) asparagine). A helical transmembrane segment spans residues 62 to 80 (NSLIVMGVLSCVFNSLAGK). At 81–99 (ICYDALDPAKYAKWKPWLK) the chain is on the cytoplasmic side. The helical transmembrane segment at 100 to 123 (PYLAVCVLFNIALFLVTLCCFLMR) threads the bilayer. Over 124–264 (GSLESTLAHG…LSYYSSLMNS (141 aa)) the chain is Lumenal. A glycan (N-linked (GlcNAc...) asparagine) is linked at asparagine 229. A helical transmembrane segment spans residues 265 to 290 (MGAVTLLVWLFEVTITIGLRYLHTAL). The Cytoplasmic portion of the chain corresponds to 291 to 346 (EGVSNPEDPECESEGWLLEKSVSETWKAFLESLKKLGKSNQVEAEGADAGQAPEAG). The interaction with MREG stretch occupies residues 341 to 346 (QAPEAG).

This sequence belongs to the PRPH2/ROM1 family. As to quaternary structure, homodimer; disulfide-linked. Forms a homotetramer. Forms a heterotetramer with ROM1. Homotetramer and heterotetramer core complexes go on to form higher order complexes by formation of intermolecular disulfide bonds. Interacts with MREG. Interacts with STX3. Interacts with SNAP25. In terms of tissue distribution, retina (photoreceptor). In rim region of ROS (rod outer segment) disks.

Its subcellular location is the membrane. The protein localises to the cell projection. It localises to the cilium. It is found in the photoreceptor outer segment. The protein resides in the photoreceptor inner segment. Functionally, essential for retina photoreceptor outer segment disk morphogenesis, may also play a role with ROM1 in the maintenance of outer segment disk structure. Required for the maintenance of retinal outer nuclear layer thickness. Required for the correct development and organization of the photoreceptor inner segment. The sequence is that of Peripherin-2 (PRPH2) from Canis lupus familiaris (Dog).